Consider the following 360-residue polypeptide: MNTHRPIESVRAHEPAVLNAAFNQDQTCFAVCHESGFQVYNTDPMELRMKRTFSTNGGVGLIAMLHRTNYVALVGGGRQPRFPVNKLCIWDDLKKKPSIMLEFMSPILNVLLSRILIVVVLKNKVLIHAFESKPKLLAQHETYDNEAGVAELSVNEQTSFLAFPGRAIGQIQLVDVSPAHRDRNLISIIKAHKSRIQCLAISNSGLLIASASQTGTIIRIHDTAKCSLRFELRRGLDRATVTSIKFSPDDSKLAVLSDKNTLHVYNLTAADPQPESAMANRLHLLSAVPLMPTYFRSVWSFVSYHIDTKDDAVNDCGVLGWADNESIVVLWKKKGIWEKYVLVENDKWTLVREGWRRFEE.

WD repeat units lie at residues 12–50, 191–231, and 236–275; these read AHEP…LRMK, AHKS…LRFE, and LDRA…PQPE.

This sequence belongs to the WD repeat PROPPIN family.

It localises to the vacuole membrane. The protein localises to the cytoplasmic vesicle membrane. Involved in mitochondrial or peroxisomal functions and amino acid signaling pathways. The sequence is that of SVP1-like protein 2 (HSV2) from Pichia angusta (Yeast).